A 206-amino-acid polypeptide reads, in one-letter code: Probable N-acetyltransferase 14 (206 aa).

Residues 6–206 (LSVREMREDE…TLVREFSKDL (201 aa)) enclose the N-acetyltransferase domain. The chain crosses the membrane as a helical span at residues 57–77 (FVLASFALALLLPVFLAVAAV).

Belongs to the camello family. In terms of tissue distribution, expressed in K-562 and HeLa cell lines and in brain.

Its subcellular location is the membrane. Functionally, probable acetyltransferase. May act as a transcription factor that regulates the expression of coproporphyrinogen oxidase by binding to a promoter regulatory element. This chain is Probable N-acetyltransferase 14 (NAT14), found in Homo sapiens (Human).